A 191-amino-acid polypeptide reads, in one-letter code: Peptidyl-tRNA hydrolase (191 aa).

Position 17 (Y17) interacts with tRNA. H22 acts as the Proton acceptor in catalysis. 3 residues coordinate tRNA: Y68, N70, and N116.

It belongs to the PTH family. Monomer.

It is found in the cytoplasm. It carries out the reaction an N-acyl-L-alpha-aminoacyl-tRNA + H2O = an N-acyl-L-amino acid + a tRNA + H(+). Functionally, hydrolyzes ribosome-free peptidyl-tRNAs (with 1 or more amino acids incorporated), which drop off the ribosome during protein synthesis, or as a result of ribosome stalling. Catalyzes the release of premature peptidyl moieties from peptidyl-tRNA molecules trapped in stalled 50S ribosomal subunits, and thus maintains levels of free tRNAs and 50S ribosomes. The sequence is that of Peptidyl-tRNA hydrolase from Mycolicibacterium smegmatis (strain ATCC 700084 / mc(2)155) (Mycobacterium smegmatis).